The sequence spans 696 residues: MVESTKEFDYIKIKLASPFRILQWANRKLPNGQFVGEVQKSETINYRTFKPEMDGLFCERIFGPSKSLECACGKYKRVRYEGLICERCGVELTESRVRRHRMGYINLIYPVTHVWYINSRPNFMALLLEVEEFEKKLDTTYTTHSENCKKCDGLKLTTSTVVDLWDERVKRIKLASLAYFIAEDEISFYGIHWDLQQYRRSRELGYTGYPLKPYPKPQNRRYSTPKYLLRATPNFLIGAPLIKRELEKLNLKSEIFRMRYFILVCTKVLNKEKPIYDESRWFRKWEQQRIYKIREQAIKRIRILENLVGTGSSPAWMILTILPVIPPALRPMIQLEGGRFATSDLNELYRRIITRNNRLLRLLEIDAPQLIIRNEKRLLQEAVDTLIDNGKRGKIALSANNRPLKSLSDIIKGKHGRFRQNLLGKRVDYSGRSVIVVGPSLRLNQCGLPYEMAIELFQPFIIRELINQGLASNMKIAKNLIQQNESIIDPVLEKVLKSHPIFLNRAPTLHRLGIQAFEPILVQGRAIKLHPLVCSAFNADFDGDQMAVHIPLSLEAQAECYMLMLAPYNFLSPANGEPIIMPSQDMVLGCYYLTVNNINGLLGSSHYFANLADVILAYSQSKLEIHSAIWIRLEEQEINESILLKTTILDDETKIEFYENLQIRKTKDNQLIVQYVQTTTGRAILNYIIQKTLNFL.

The Zn(2+) site is built by Cys70, Cys72, Cys85, and Cys88. Mg(2+) contacts are provided by Asp540, Asp542, and Asp544.

It belongs to the RNA polymerase beta' chain family. RpoC1 subfamily. In terms of assembly, in plastids the minimal PEP RNA polymerase catalytic core is composed of four subunits: alpha, beta, beta', and beta''. When a (nuclear-encoded) sigma factor is associated with the core the holoenzyme is formed, which can initiate transcription. Mg(2+) serves as cofactor. The cofactor is Zn(2+).

It is found in the plastid. Its subcellular location is the chloroplast. The enzyme catalyses RNA(n) + a ribonucleoside 5'-triphosphate = RNA(n+1) + diphosphate. DNA-dependent RNA polymerase catalyzes the transcription of DNA into RNA using the four ribonucleoside triphosphates as substrates. This is DNA-directed RNA polymerase subunit beta' from Phaeodactylum tricornutum (strain CCAP 1055/1).